Consider the following 85-residue polypeptide: Putative transmembrane protein ORF85 (85 aa).

Transmembrane regions (helical) follow at residues 12–32 (FPPT…KFLS) and 44–64 (LGII…GAGI).

It is found in the host membrane. The protein is Putative transmembrane protein ORF85 of Acidianus convivator (ABV).